The sequence spans 307 residues: Aquaporin Lacbi1:387054 (307 aa).

The Cytoplasmic segment spans residues 1 to 40; that stretch reads MSNAPLVHLSDLQKRLRVFAVWEKVRNDGKVHWAIECFAE. The helical transmembrane segment at 41 to 61 threads the bilayer; that stretch reads MFGVFLYVYFGLGSTAGWVIG. Residues 62-68 are Extracellular-facing; sequence NIIKETN. Residues 69 to 89 traverse the membrane as a helical segment; sequence LSSILQIGLAYAFGIWFAIGL. The Cytoplasmic portion of the chain corresponds to 90–120; the sequence is CSSSSGGHFNPCVTLSFVVFKGFPKLKACRY. Residues 99-101 carry the NPA 1 motif; it reads NPC. The chain crosses the membrane as a helical span at residues 121–141; it reads IIAQILGAYIASALVYSQWNV. Over 142-157 the chain is Extracellular; that stretch reads LIEECTLGLIKAKAYD. Residues 158–178 traverse the membrane as a helical segment; the sequence is TTMFTPNGPAGIFALYLVPGA. The short motif at 167–169 is the NPA 2 element; that stretch reads AGI. Topologically, residues 179-183 are cytoplasmic; that stretch reads QSVPR. A helical membrane pass occupies residues 184–203; that stretch reads ALLNEFVNSTLIGMIIWAAL. At 204–216 the chain is on the extracellular side; it reads DPTNMMVPPAMGP. Residues 217 to 237 form a helical membrane-spanning segment; it reads LFISLAYAAVIWGFATPAVAL. Over 238–264 the chain is Cytoplasmic; that stretch reads NTARDLGARLFAMSIWGTKAAGSGYSA. The helical transmembrane segment at 265–285 threads the bilayer; that stretch reads IACLINIPATLLGVFLYEVFF. The Extracellular segment spans residues 286 to 307; that stretch reads TDSDRGKLLPILNGKKLKHIFS.

Belongs to the MIP/aquaporin (TC 1.A.8) family.

The protein localises to the membrane. It carries out the reaction H2O(in) = H2O(out). The enzyme catalyses NH4(+)(in) = NH4(+)(out). It catalyses the reaction urea(in) = urea(out). The catalysed reaction is glycerol(in) = glycerol(out). Water channel required to facilitate the transport of water across membranes. In addition to water, also shows strong ammonium transport activity. Also enables low but statistically significant glycerol and urea permeability. May be involved in fungal nitrogen (ammonium) support of the plant host in symbiosis. The polypeptide is Aquaporin Lacbi1:387054 (Laccaria bicolor (strain S238N-H82 / ATCC MYA-4686) (Bicoloured deceiver)).